The following is a 130-amino-acid chain: Fluoride-specific ion channel FluC (130 aa).

A run of 4 helical transmembrane segments spans residues 2–22, 36–56, 71–91, and 100–120; these read GLLL…RFAL, GILL…AFLI, FLLV…SLDI, and IFIA…AVIL. Positions 79 and 82 each coordinate Na(+).

It belongs to the fluoride channel Fluc/FEX (TC 1.A.43) family.

It is found in the cell inner membrane. The enzyme catalyses fluoride(in) = fluoride(out). Its activity is regulated as follows. Na(+) is not transported, but it plays an essential structural role and its presence is essential for fluoride channel function. Functionally, fluoride-specific ion channel. Important for reducing fluoride concentration in the cell, thus reducing its toxicity. The chain is Fluoride-specific ion channel FluC from Francisella tularensis subsp. tularensis (strain FSC 198).